The sequence spans 147 residues: Hemoglobin subunit epsilon (147 aa).

The Globin domain maps to 3-147 (HFTAEEKAAV…VAIALAHKYH (145 aa)). Phosphoserine is present on residues S14 and S51. The heme b site is built by H64 and H93.

It belongs to the globin family. Heterotetramer of two alpha chains and two epsilon chains in early embryonic hemoglobin Gower-2; two zeta chains and two epsilon chains in early embryonic hemoglobin Gower-1. As to expression, red blood cells.

The epsilon chain is a beta-type chain of early mammalian embryonic hemoglobin. The polypeptide is Hemoglobin subunit epsilon (HBE1) (Symphalangus syndactylus (Siamang)).